The sequence spans 208 residues: Casparian strip membrane protein 2 (208 aa).

The tract at residues 1-23 (MDSKSGRSESAINIPESNSTKHK) is disordered. The Cytoplasmic portion of the chain corresponds to 1-46 (MDSKSGRSESAINIPESNSTKHKSTVVHTATKVAAVAPRGGGWRRG). Residues 8–18 (SESAINIPESN) are compositionally biased toward polar residues. Residues 47-67 (VSIFDFILRICALAAALAATA) form a helical membrane-spanning segment. The Extracellular portion of the chain corresponds to 68–96 (TMGTTDQTLPFFTQFFQFQASYDDLPAFT). A helical transmembrane segment spans residues 97-117 (FFVVANGIASGYLVLSLPFSI). The Cytoplasmic portion of the chain corresponds to 118–129 (ATIVRPHAAAIK). A helical membrane pass occupies residues 130 to 150 (LLLIIFDTVMVAFTAAAAAAA). The Extracellular segment spans residues 151–184 (AAIVYLAHNGNSKTNWFAICQQFNDFCQRVSGAV). The chain crosses the membrane as a helical span at residues 185–205 (VASFVAAVILIFLVVLSAVAI). Residues 206–208 (RKH) are Cytoplasmic-facing.

Belongs to the Casparian strip membrane proteins (CASP) family. Homodimer and heterodimers.

It localises to the cell membrane. In terms of biological role, regulates membrane-cell wall junctions and localized cell wall deposition. Required for establishment of the Casparian strip membrane domain (CSD) and the subsequent formation of Casparian strips, a cell wall modification of the root endodermis that determines an apoplastic barrier between the intraorganismal apoplasm and the extraorganismal apoplasm and prevents lateral diffusion. This is Casparian strip membrane protein 2 from Triphysaria pusilla (Dwarf owl's-clover).